We begin with the raw amino-acid sequence, 329 residues long: DNA-directed RNA polymerase subunit alpha (329 aa).

Residues 1 to 235 (MLGSVTDFLK…EQLEAFVDLR (235 aa)) form an alpha N-terminal domain (alpha-NTD) region. Positions 249 to 329 (FDPILLRPVD…NWPPASIADE (81 aa)) are alpha C-terminal domain (alpha-CTD).

This sequence belongs to the RNA polymerase alpha chain family. Homodimer. The RNAP catalytic core consists of 2 alpha, 1 beta, 1 beta' and 1 omega subunit. When a sigma factor is associated with the core the holoenzyme is formed, which can initiate transcription.

The catalysed reaction is RNA(n) + a ribonucleoside 5'-triphosphate = RNA(n+1) + diphosphate. Functionally, DNA-dependent RNA polymerase catalyzes the transcription of DNA into RNA using the four ribonucleoside triphosphates as substrates. This is DNA-directed RNA polymerase subunit alpha from Aeromonas hydrophila subsp. hydrophila (strain ATCC 7966 / DSM 30187 / BCRC 13018 / CCUG 14551 / JCM 1027 / KCTC 2358 / NCIMB 9240 / NCTC 8049).